The following is a 733-amino-acid chain: Acyl-coenzyme A oxidase (733 aa).

The protein belongs to the acyl-CoA oxidase family. The cofactor is FAD.

The protein resides in the peroxisome. It carries out the reaction a 2,3-saturated acyl-CoA + O2 = a (2E)-enoyl-CoA + H2O2. It participates in lipid metabolism; peroxisomal fatty acid beta-oxidation. The chain is Acyl-coenzyme A oxidase (POX1) from Eremothecium gossypii (strain ATCC 10895 / CBS 109.51 / FGSC 9923 / NRRL Y-1056) (Yeast).